The following is a 744-amino-acid chain: MSDLRITLDPDFIAQTKKEVTPHWGELGWVTYKRTYARWLDDKNRSENWDETVKRVIEGNINLDPRLKNNPSKKTIHELTAEAKQLFRLVYGLAATPSGRNLWISGTDYQKRNGDSLNNCWFISIRPQKYGNSHIVPAYLTQDQVAPSMPFSFLFDQLMKGGGVGFSVVDENINQIPKLDQKVDLTIVIDKQSKSYDASLKLGATDLDEWKKTNQEKEDYIYYKLPDTREGWVLANARLIDMHFNSTNPENKKKLVLDISDIRPYGAKIHGFGGTASGPMPLIEMLFDINQILNERAGQKLTAVDATDICNLIGKTVVAGNVRRSAELALGSSNNQDFITMKQDKKKLYHHRWASNNSVAINSEFDNYQPIADSILHNGEPGVVNLELSRNYGRIKDGYQAGIDGEVEGTNPCGEISLANGEPCNLFEVFPFIAQKQGWDLKEAFKLAARYTKRVTFSPYDWEVSRKIINKNRRIGVSMSGIQDWILSTFGHRVVTGFKTATDSETGKEIKDPVYDPEIIKTVDGLYQAVVDADKDYSQELNCNTSIKHTTVKPSGTVAKLAGVSEGMHFHYSGYLIQRIRFQETDPLLPALKDCGYRTEPDIYTPHTICVEFPIKAANADSDNFASAGTVSIAEQFATQAFLQTYWSDNAVSCTITFQNDESDQIAPLLHQYRYAIKSTSLLPYYGGSLKQAPKEPISKEKYEKADNHITGNVEIVFEQTNEDQKGLELVDQSDCDNGACPIK.

Cysteine 120 and cysteine 424 form a disulfide bridge. Positions 148 to 159 (SMPFSFLFDQLM) are effector region-1. Residues 169-318 (VDENINQIPK…ICNLIGKTVV (150 aa)) form an effector region-2 region. Catalysis depends on residues cysteine 413 and glutamate 415. Residues 570–631 (FHYSGYLIQR…SDNFASAGTV (62 aa)) form an adenosylcobalamin-binding-1 region. The segment at 690–729 (LKQAPKEPISKEKYEKADNHITGNVEIVFEQTNEDQKGLE) is adenosylcobalamin-binding-2.

This sequence belongs to the class II ribonucleoside-triphosphate reductase family. Monomer. Adenosylcob(III)alamin is required as a cofactor.

It catalyses the reaction a 2'-deoxyribonucleoside 5'-triphosphate + [thioredoxin]-disulfide + H2O = a ribonucleoside 5'-triphosphate + [thioredoxin]-dithiol. Allosterically regulated by ATP and dNTP. The protein is Adenosylcobalamin-dependent ribonucleoside-triphosphate reductase (rtpR) of Lactobacillus gasseri (strain ATCC 33323 / DSM 20243 / BCRC 14619 / CIP 102991 / JCM 1131 / KCTC 3163 / NCIMB 11718 / NCTC 13722 / AM63).